Here is a 373-residue protein sequence, read N- to C-terminus: Heterogeneous nuclear ribonucleoprotein A3 homolog 1 (373 aa).

The tract at residues 1–25 (MPRGGMDDHWPSSDDQGHDPKEPEQ) is disordered. 2 RRM domains span residues 27–110 (RKLF…DSAR) and 118–206 (KKIF…SAQR). Disordered stretches follow at residues 196 to 218 (KQEM…FMGR) and 319 to 373 (DFGN…GRRF). Residues 207–218 (GRGGGGSNFMGR) show a composition bias toward gly residues. Over residues 319 to 333 (DFGNYGGQQQSNYGP) the composition is skewed to low complexity. Residues 334–373 (MKGGSFSGRSSGGSGSGPYGGGYGSGGGGGGGGSYGGRRF) show a composition bias toward gly residues.

It localises to the nucleus. This Xenopus laevis (African clawed frog) protein is Heterogeneous nuclear ribonucleoprotein A3 homolog 1.